A 465-amino-acid chain; its full sequence is MLMPGMEYSTVSKIYGPLMIVQGVKGVAYGEVVEIETESGEKRKGQVLEARQDMAIVQVFEGTRDLDIKTTRVRFTGETLKVPVSMDMLGRVFNGIGKPIDGGPEIIPEDRRDVHGAPLNPVARAYPRDFIQTGVSAIDGMNTLVRGQKLPIFSGSGLPHNMLAAQIARQAKVLGEEEQFAVVFAAMGITYEEANFFKKSFEETGAIERAVLFLNLADDPAIERIITPRMALTVAEYLAFDYDMQVLVILTDMTNYAEALREISAAREEVPGRRGYPGYMYTDLATIYERAGRVRGKKGSITQMPILTMPDDDITHPIPDLTGYITEGQIVLSRELYRKGIYPPIDVLPSLSRLMKDGIGKGRTRDDHPQLSQQLYAAYAEGRSLRDLVAVVGEEALSETDRKYLKFADRFEREFIAQRYDEDRSIEETLDLGWELLAELPESELKRVRKEYILKYHPKYRKREG.

The protein belongs to the ATPase alpha/beta chains family. Has multiple subunits with at least A(3), B(3), C, D, E, F, H, I and proteolipid K(x).

Its subcellular location is the cell membrane. Component of the A-type ATP synthase that produces ATP from ADP in the presence of a proton gradient across the membrane. The B chain is a regulatory subunit. This is A-type ATP synthase subunit B from Thermococcus onnurineus (strain NA1).